The sequence spans 951 residues: Glycine dehydrogenase (decarboxylating) 1 (951 aa).

An N6-(pyridoxal phosphate)lysine modification is found at lysine 703.

It belongs to the GcvP family. The glycine cleavage system is composed of four proteins: P, T, L and H. Requires pyridoxal 5'-phosphate as cofactor.

It catalyses the reaction N(6)-[(R)-lipoyl]-L-lysyl-[glycine-cleavage complex H protein] + glycine + H(+) = N(6)-[(R)-S(8)-aminomethyldihydrolipoyl]-L-lysyl-[glycine-cleavage complex H protein] + CO2. In terms of biological role, the glycine cleavage system catalyzes the degradation of glycine. The P protein binds the alpha-amino group of glycine through its pyridoxal phosphate cofactor; CO(2) is released and the remaining methylamine moiety is then transferred to the lipoamide cofactor of the H protein. The protein is Glycine dehydrogenase (decarboxylating) 1 (gcvP1) of Pseudomonas putida (strain ATCC 47054 / DSM 6125 / CFBP 8728 / NCIMB 11950 / KT2440).